Consider the following 445-residue polypeptide: Ubiquitin carboxyl-terminal hydrolase MINDY-3 (445 aa).

Cys-51 (nucleophile) is an active-site residue. Ser-125 carries the phosphoserine modification. The active-site Proton acceptor is His-287.

It belongs to the MINDY deubiquitinase family. FAM188 subfamily. As to quaternary structure, interacts with COPS5. Widely expressed with high levels in heart, skeletal muscle, and kidney, and low levels in liver and brain. Also expressed in lung (at protein level).

It is found in the nucleus. The catalysed reaction is Thiol-dependent hydrolysis of ester, thioester, amide, peptide and isopeptide bonds formed by the C-terminal Gly of ubiquitin (a 76-residue protein attached to proteins as an intracellular targeting signal).. Hydrolase that can remove 'Lys-48'-linked conjugated ubiquitin from proteins. This chain is Ubiquitin carboxyl-terminal hydrolase MINDY-3, found in Homo sapiens (Human).